The chain runs to 382 residues: AIAAVITFLILFTIFGNALVILAVLTSRSLRAPQNLFLVSLAAADILVATLIIPFSLANELLGYWYFRHTWCEVYLALDVLFCTSSIVHLCAISLDRYWSVSRALEYNSKRTPRRIKGIILTVWLIAAFISLPPLIYKGDKGKKPGGRPQCKLNEEAWYILSSSIGSFFAPCLIMILVYLRIYLIAKRRNRQGPHGKQAPGDGDTGPSALGGTSTISKLPPSILPAVGEANGHSKPPGEREGGEQMGDPTSPSTPPNQSSVGPEDGSQKQEEEEEEEEEEEEECGPPAPPTSSSLQGTPNFQPSQGSQVLATLRGQVLLARGPASLGLQPWRRRTQMNREKRFTFVLAVVIGVFVLCWFPFFFSYSLGAICPQHCKVPHGLF.

The helical transmembrane segment at 1-25 threads the bilayer; that stretch reads AIAAVITFLILFTIFGNALVILAVL. The Cytoplasmic segment spans residues 26–36; it reads TSRSLRAPQNL. A helical transmembrane segment spans residues 37–62; it reads FLVSLAAADILVATLIIPFSLANELL. Residues 63–72 lie on the Extracellular side of the membrane; sequence GYWYFRHTWC. C72 and C151 form a disulfide bridge. Residues 73 to 95 traverse the membrane as a helical segment; that stretch reads EVYLALDVLFCTSSIVHLCAISL. Over 96–117 the chain is Cytoplasmic; sequence DRYWSVSRALEYNSKRTPRRIK. Residues 118–140 traverse the membrane as a helical segment; sequence GIILTVWLIAAFISLPPLIYKGD. At 141 to 156 the chain is on the extracellular side; sequence KGKKPGGRPQCKLNEE. Residues 157–180 traverse the membrane as a helical segment; that stretch reads AWYILSSSIGSFFAPCLIMILVYL. The Cytoplasmic segment spans residues 181-346; sequence RIYLIAKRRN…MNREKRFTFV (166 aa). The disordered stretch occupies residues 192–305; that stretch reads QGPHGKQAPG…QGTPNFQPSQ (114 aa). A compositionally biased stretch (acidic residues) spans 271-284; sequence EEEEEEEEEEEEEC. A compositionally biased stretch (polar residues) spans 291 to 305; it reads TSSSLQGTPNFQPSQ. A helical membrane pass occupies residues 347–370; the sequence is LAVVIGVFVLCWFPFFFSYSLGAI. The Extracellular segment spans residues 371–379; it reads CPQHCKVPH. A helical transmembrane segment spans residues 380–382; that stretch reads GLF.

The protein belongs to the G-protein coupled receptor 1 family. Adrenergic receptor subfamily. ADRA2B sub-subfamily. Interacts with RAB26. Interacts with PPP1R9B. Interacts with GGA1, GGA2 and GGA3.

It is found in the cell membrane. Its function is as follows. Alpha-2 adrenergic receptors mediate the catecholamine-induced inhibition of adenylate cyclase through the action of G proteins. The chain is Alpha-2B adrenergic receptor (ADRA2B) from Didelphis virginiana (North American opossum).